The primary structure comprises 472 residues: E1B 55 kDa protein (472 aa).

The tract at residues 1–90 is disordered; that stretch reads MERPNPSVGG…GQRGEKRKLE (90 aa). Low complexity predominate over residues 32–44; sequence RLLAGAASARSGS. A compositionally biased stretch (gly residues) spans 45 to 57; the sequence is SAGGGGGGGGGGE. Residues S468 and S469 each carry the phosphoserine modification.

Belongs to the adenoviridae E1B 55 kDa protein family. As to quaternary structure, interacts with host PML-4 and PML-5; this interaction promotes efficient subnuclear targeting of E1B-55K to PML nuclear bodies. Interacts with E4-ORF3 protein. Interacts with E4-ORF6 protein.

Its subcellular location is the host nucleus. It is found in the host cytoplasm. Plays a major role to prevent cellular inhibition of viral genome replication. Assembles an SCF-like E3 ubiquitin ligase complex based on the cellular proteins ELOB, ELOC, CUL5 and RBX1, in cooperation with viral E4orf6. This viral RING-type ligase ubiquitinates cellular substrates and targets them to proteasomal degradation: TP53/p53, LIG4, MRE11-RAD50-NBS1 (MRN) complex, ITGA3, DAXX and BLM. E1B-55K probably acts as the substrate-specific adapter of the SCF-like E3 ubiquitin ligase complex. Degradation of host TP53/p53 activity is essential for preventing E1A-induced TP53 accumulation that would otherwise lead to cell apoptosis and growth arrest. E1B-55K also inactivates TP53 transcription-factor activity by binding its transactivation domain. E1B-55K also functions as a SUMO1 E3 ligase for TP53 which causes the latter to be sequestered in promyelocytic leukemia (PML) nuclear bodies thereby contributing to maximal inhibition of TP53 function. The sequence is that of E1B 55 kDa protein from Homo sapiens (Human).